The chain runs to 175 residues: uncharacterized protein (175 aa).

The protein belongs to the asfivirus B175L family.

This is an uncharacterized protein from African swine fever virus (strain Badajoz 1971 Vero-adapted) (Ba71V).